We begin with the raw amino-acid sequence, 758 residues long: ATP-dependent RNA helicase dbp7 (758 aa).

2 disordered regions span residues 26–99 (GGTW…QPRQ) and 111–130 (PQKV…KPTN). Over residues 35 to 45 (AKKIAKHHAKG) the composition is skewed to basic residues. Over residues 84 to 99 (GKQQSHTHPHSNQPRQ) the composition is skewed to polar residues. Basic and acidic residues predominate over residues 111 to 127 (PQKVEEVKEEGHVEDAK). Residues 138–167 (DTFTNLGLSPSLAAHLLTKLELKAPTAIQK) carry the Q motif motif. The 202-residue stretch at 171 to 372 (SQLLKEEGDA…EISLKDAVHI (202 aa)) folds into the Helicase ATP-binding domain. 184 to 191 (AETGSGKT) is an ATP binding site. The DEAD box signature appears at 308-311 (DEGD). One can recognise a Helicase C-terminal domain in the interval 398-603 (QLKQSYAVVA…ALTRADANDI (206 aa)). Disordered regions lie at residues 455–483 (KEDG…APAT) and 691–758 (VPGL…FNLA). Residues 696-709 (QGKEETKKDFKAER) show a composition bias toward basic and acidic residues.

The protein belongs to the DEAD box helicase family. DDX31/DBP7 subfamily.

It is found in the nucleus. Its subcellular location is the nucleolus. It carries out the reaction ATP + H2O = ADP + phosphate + H(+). ATP-binding RNA helicase involved in the biogenesis of 60S ribosomal subunits and is required for the normal formation of 25S and 5.8S rRNAs. This Neosartorya fischeri (strain ATCC 1020 / DSM 3700 / CBS 544.65 / FGSC A1164 / JCM 1740 / NRRL 181 / WB 181) (Aspergillus fischerianus) protein is ATP-dependent RNA helicase dbp7 (dbp7).